We begin with the raw amino-acid sequence, 207 residues long: HTH-type transcriptional regulator BetI 2 (207 aa).

In terms of domain architecture, HTH tetR-type spans 8 to 68 (PIRRQQLIKA…ATMRQILTDL (61 aa)). The segment at residues 31–50 (TVMRIARHAGVSAGIISHYF) is a DNA-binding region (H-T-H motif).

It participates in amine and polyamine biosynthesis; betaine biosynthesis via choline pathway [regulation]. Functionally, repressor involved in the biosynthesis of the osmoprotectant glycine betaine. It represses transcription of the choline transporter BetT and the genes of BetAB involved in the synthesis of glycine betaine. The sequence is that of HTH-type transcriptional regulator BetI 2 from Chromohalobacter salexigens (strain ATCC BAA-138 / DSM 3043 / CIP 106854 / NCIMB 13768 / 1H11).